The primary structure comprises 431 residues: Chorismate synthase 2, chloroplastic (431 aa).

The N-terminal 48 residues, 1–48, are a transit peptide targeting the chloroplast; it reads MASSMLTKQFLGAPFSSFGSGQQPSKLCSSNLRFPTHRSQPKRLEIQA. A disordered region spans residues 93–141; that stretch reads DRRRPGQSRITTPRKETDTCKISSGTADGLTTGSPIKVEVPNTDQRGND. Over residues 112–126 the composition is skewed to polar residues; the sequence is CKISSGTADGLTTGS.

This sequence belongs to the chorismate synthase family. Homotetramer. FMNH2 serves as cofactor. In terms of tissue distribution, predominantly expressed in flowers and roots and, to a lesser extent, in stems, leaves, and cotyledons.

Its subcellular location is the plastid. It is found in the chloroplast. It catalyses the reaction 5-O-(1-carboxyvinyl)-3-phosphoshikimate = chorismate + phosphate. The protein operates within metabolic intermediate biosynthesis; chorismate biosynthesis; chorismate from D-erythrose 4-phosphate and phosphoenolpyruvate: step 7/7. Functionally, catalyzes the last common step of the biosynthesis of aromatic amino acids, produced via the shikimic acid pathway. This Solanum lycopersicum (Tomato) protein is Chorismate synthase 2, chloroplastic (CS2).